The following is a 548-amino-acid chain: Chaperonin GroEL (548 aa).

Residues Thr29–Pro32, Lys50, Asp86–Thr90, Gly416, and Asp497 each bind ATP.

The protein belongs to the chaperonin (HSP60) family. As to quaternary structure, forms a cylinder of 14 subunits composed of two heptameric rings stacked back-to-back. Interacts with the co-chaperonin GroES.

The protein resides in the cytoplasm. It catalyses the reaction ATP + H2O + a folded polypeptide = ADP + phosphate + an unfolded polypeptide.. Together with its co-chaperonin GroES, plays an essential role in assisting protein folding. The GroEL-GroES system forms a nano-cage that allows encapsulation of the non-native substrate proteins and provides a physical environment optimized to promote and accelerate protein folding. In Neorickettsia risticii (Ehrlichia risticii), this protein is Chaperonin GroEL.